Reading from the N-terminus, the 116-residue chain is T cell receptor alpha variable 14/delta variable 4 (116 aa).

The N-terminal stretch at 1 to 21 (MSLSSLLKVVTASLWLGPGIA) is a signal peptide. Positions 22 to 116 (QKITQTQPGM…SAMYFCAMRE (95 aa)) constitute an Ig-like domain. The cysteines at positions 43 and 112 are disulfide-linked. An N-linked (GlcNAc...) asparagine glycan is attached at Asn-78.

Alpha-beta TR is a heterodimer composed of an alpha and beta chain; disulfide-linked. The alpha-beta TR is associated with the transmembrane signaling CD3 coreceptor proteins to form the TR-CD3 (TcR or TCR). The assembly of alpha-beta TR heterodimers with CD3 occurs in the endoplasmic reticulum where a single alpha-beta TR heterodimer associates with one CD3D-CD3E heterodimer, one CD3G-CD3E heterodimer and one CD247 homodimer forming a stable octameric structure. CD3D-CD3E and CD3G-CD3E heterodimers preferentially associate with TR alpha and TR beta chains, respectively. The association of the CD247 homodimer is the last step of TcR assembly in the endoplasmic reticulum and is required for transport to the cell surface.

The protein localises to the cell membrane. Its function is as follows. V region of the variable domain of T cell receptor (TR) alpha chain that participates in the antigen recognition. Alpha-beta T cell receptors are antigen specific receptors which are essential to the immune response and are present on the cell surface of T lymphocytes. Recognize peptide-major histocompatibility (MH) (pMH) complexes that are displayed by antigen presenting cells (APC), a prerequisite for efficient T cell adaptive immunity against pathogens. Binding of alpha-beta TR to pMH complex initiates TR-CD3 clustering on the cell surface and intracellular activation of LCK that phosphorylates the ITAM motifs of CD3G, CD3D, CD3E and CD247 enabling the recruitment of ZAP70. In turn ZAP70 phosphorylates LAT, which recruits numerous signaling molecules to form the LAT signalosome. The LAT signalosome propagates signal branching to three major signaling pathways, the calcium, the mitogen-activated protein kinase (MAPK) kinase and the nuclear factor NF-kappa-B (NF-kB) pathways, leading to the mobilization of transcription factors that are critical for gene expression and essential for T cell growth and differentiation. The T cell repertoire is generated in the thymus, by V-(D)-J rearrangement. This repertoire is then shaped by intrathymic selection events to generate a peripheral T cell pool of self-MH restricted, non-autoaggressive T cells. Post-thymic interaction of alpha-beta TR with the pMH complexes shapes TR structural and functional avidity. This is T cell receptor alpha variable 14/delta variable 4 from Homo sapiens (Human).